The following is a 562-amino-acid chain: Glucan 1,3-beta-glucosidase 2 (562 aa).

The signal sequence occupies residues 1–22; that stretch reads MPLKSFFFSAFLVLCLSKFTQG. Residues Asn-50, Asn-77, Asn-86, Asn-90, Asn-106, Asn-157, and Asn-220 are each glycosylated (N-linked (GlcNAc...) asparagine). Glu-254 functions as the Proton donor in the catalytic mechanism. Asn-281, Asn-285, Asn-310, Asn-317, and Asn-322 each carry an N-linked (GlcNAc...) asparagine glycan. Catalysis depends on His-334, which acts as the Nucleophile. 3 N-linked (GlcNAc...) asparagine glycosylation sites follow: Asn-401, Asn-480, and Asn-539.

It belongs to the glycosyl hydrolase 5 (cellulase A) family.

It localises to the cell membrane. It catalyses the reaction Successive hydrolysis of beta-D-glucose units from the non-reducing ends of (1-&gt;3)-beta-D-glucans, releasing alpha-glucose.. This chain is Glucan 1,3-beta-glucosidase 2 (EXG2), found in Saccharomyces cerevisiae (strain ATCC 204508 / S288c) (Baker's yeast).